The chain runs to 200 residues: Holliday junction resolvase RecU (200 aa).

The disordered stretch occupies residues 1 to 25; that stretch reads MTIRYPNGKRYNQASQPQKTPIKTH. Over residues 10-25 the composition is skewed to polar residues; sequence RYNQASQPQKTPIKTH. Residues T85, D87, E100, and Q119 each contribute to the Mg(2+) site.

This sequence belongs to the RecU family. Requires Mg(2+) as cofactor.

It is found in the cytoplasm. The catalysed reaction is Endonucleolytic cleavage at a junction such as a reciprocal single-stranded crossover between two homologous DNA duplexes (Holliday junction).. Functionally, endonuclease that resolves Holliday junction intermediates in genetic recombination. Cleaves mobile four-strand junctions by introducing symmetrical nicks in paired strands. Promotes annealing of linear ssDNA with homologous dsDNA. Required for DNA repair, homologous recombination and chromosome segregation. This Bacillus cereus (strain B4264) protein is Holliday junction resolvase RecU.